Consider the following 364-residue polypeptide: DNA replication and repair protein RecF (364 aa).

30–37 serves as a coordination point for ATP; that stretch reads GENGSGKT.

The protein belongs to the RecF family.

The protein localises to the cytoplasm. In terms of biological role, the RecF protein is involved in DNA metabolism; it is required for DNA replication and normal SOS inducibility. RecF binds preferentially to single-stranded, linear DNA. It also seems to bind ATP. This Xylella fastidiosa (strain M23) protein is DNA replication and repair protein RecF.